Reading from the N-terminus, the 604-residue chain is UvrABC system protein C (604 aa).

The region spanning 13-92 is the GIY-YIG domain; that stretch reads ASPGVYLMKD…IKKYHPKYNV (80 aa). Residues 205–240 enclose the UVR domain; the sequence is SEIVQDLEKSIEKASKEQKFEQAGMYYRTLKLIQQA.

It belongs to the UvrC family. In terms of assembly, interacts with UvrB in an incision complex.

The protein resides in the cytoplasm. The UvrABC repair system catalyzes the recognition and processing of DNA lesions. UvrC both incises the 5' and 3' sides of the lesion. The N-terminal half is responsible for the 3' incision and the C-terminal half is responsible for the 5' incision. This is UvrABC system protein C from Chlamydia abortus (strain DSM 27085 / S26/3) (Chlamydophila abortus).